Consider the following 210-residue polypeptide: Mitochondrial coenzyme A diphosphatase NUDT8 (210 aa).

The 148-residue stretch at 25 to 172 (LRSRPAAAAV…HFSYTLPVFL (148 aa)) folds into the Nudix hydrolase domain. Position 70 is an N6-succinyllysine (K70). A Nudix box motif is present at residues 70–91 (KCDPDDQDVIHTALRETQEELG). The Mg(2+) site is built by E85 and E89. N6-succinyllysine is present on K96.

It belongs to the Nudix hydrolase family. As to quaternary structure, monomer. Requires Mg(2+) as cofactor. The cofactor is Mn(2+). As to expression, expressed at the highest levels in the kidneys, heart, brown adipose tissue and liver (at protein level). Expressed at lower levels in the brain, skeletal muscle, and white adipose tissue (at protein level).

The protein localises to the mitochondrion. The catalysed reaction is an acyl-CoA + H2O = an acyl-4'-phosphopantetheine + adenosine 3',5'-bisphosphate + 2 H(+). The enzyme catalyses CoA + H2O = (R)-4'-phosphopantetheine + adenosine 3',5'-bisphosphate + 2 H(+). It catalyses the reaction acetyl-CoA + H2O = S-acetyl-4'-phosphopantetheine + adenosine 3',5'-bisphosphate + 2 H(+). It carries out the reaction butanoyl-CoA + H2O = S-butanoyl-4'-phosphopantetheine + adenosine 3',5'-bisphosphate + 2 H(+). The catalysed reaction is hexanoyl-CoA + H2O = hexanoyl-4'-phosphopantetheine + adenosine 3',5'-bisphosphate + 2 H(+). The enzyme catalyses octanoyl-CoA + H2O = S-octanoyl-4'-phosphopantetheine + adenosine 3',5'-bisphosphate + 2 H(+). It catalyses the reaction propanoyl-CoA + H2O = propanoyl-4'-phosphopantetheine + adenosine 3',5'-bisphosphate + 2 H(+). It carries out the reaction malonyl-CoA + H2O = malonyl-4'-phosphopantetheine + adenosine 3',5'-bisphosphate + 2 H(+). The catalysed reaction is succinyl-CoA + H2O = succinyl-4'-phosphopantetheine + adenosine 3',5'-bisphosphate + 2 H(+). The enzyme catalyses a 5'-end CoA-ribonucleoside in mRNA + H2O = a 5'-end phospho-adenosine-phospho-ribonucleoside in mRNA + (R)-4'-phosphopantetheine + 2 H(+). In terms of biological role, acyl-CoA diphosphatase that mediates the hydrolysis of a wide range of CoA and CoA esters yielding 3',5'-ADP and the corresponding 4'-phosphopantetheine derivative as products. Hydrolyzes short- and medium-chain acyl-CoAs, exhibiting the highest activity toward free CoA, hexanoyl-CoA, and octanoyl-CoA and the lowest activity against acetyl-CoA. Exhibits decapping activity towards dpCoA-capped RNAs in vitro. The protein is Mitochondrial coenzyme A diphosphatase NUDT8 (Nudt8) of Mus musculus (Mouse).